The following is a 226-amino-acid chain: Urease accessory protein UreF (226 aa).

This sequence belongs to the UreF family. As to quaternary structure, ureD, UreF and UreG form a complex that acts as a GTP-hydrolysis-dependent molecular chaperone, activating the urease apoprotein by helping to assemble the nickel containing metallocenter of UreC. The UreE protein probably delivers the nickel.

The protein localises to the cytoplasm. Functionally, required for maturation of urease via the functional incorporation of the urease nickel metallocenter. This Burkholderia ambifaria (strain MC40-6) protein is Urease accessory protein UreF.